Reading from the N-terminus, the 232-residue chain is tRNA1(Val) (adenine(37)-N6)-methyltransferase (232 aa).

The protein belongs to the methyltransferase superfamily. tRNA (adenine-N(6)-)-methyltransferase family.

It is found in the cytoplasm. It carries out the reaction adenosine(37) in tRNA1(Val) + S-adenosyl-L-methionine = N(6)-methyladenosine(37) in tRNA1(Val) + S-adenosyl-L-homocysteine + H(+). Its function is as follows. Specifically methylates the adenine in position 37 of tRNA(1)(Val) (anticodon cmo5UAC). The protein is tRNA1(Val) (adenine(37)-N6)-methyltransferase of Haemophilus influenzae (strain PittEE).